The chain runs to 129 residues: D-ribose pyranase (129 aa).

The Proton donor role is filled by H20. Residues D28, H96, and 118–120 (YAN) contribute to the substrate site.

This sequence belongs to the RbsD / FucU family. RbsD subfamily. Homodecamer.

Its subcellular location is the cytoplasm. The enzyme catalyses beta-D-ribopyranose = beta-D-ribofuranose. The protein operates within carbohydrate metabolism; D-ribose degradation; D-ribose 5-phosphate from beta-D-ribopyranose: step 1/2. Catalyzes the interconversion of beta-pyran and beta-furan forms of D-ribose. This chain is D-ribose pyranase, found in Shouchella clausii (strain KSM-K16) (Alkalihalobacillus clausii).